The sequence spans 123 residues: Large ribosomal subunit protein uL14 (123 aa).

This sequence belongs to the universal ribosomal protein uL14 family. As to quaternary structure, part of the 50S ribosomal subunit. Forms a cluster with proteins L3 and L19. In the 70S ribosome, L14 and L19 interact and together make contacts with the 16S rRNA in bridges B5 and B8.

Binds to 23S rRNA. Forms part of two intersubunit bridges in the 70S ribosome. The sequence is that of Large ribosomal subunit protein uL14 from Photobacterium profundum (strain SS9).